Consider the following 238-residue polypeptide: Neuromodulin (238 aa).

The tract at residues 1 to 238 (MLCCMRRTKQ…EEPEADQEHA (238 aa)) is disordered. 2 S-palmitoyl cysteine lipidation sites follow: C3 and C4. Basic and acidic residues predominate over residues 9–32 (KQVEKNDEDQKIEQDGIKPEDKAH). In terms of domain architecture, IQ spans 31-60 (AHKAATKIQASFRGHITRKKLKGEKKDDAQ). S41 carries the phosphoserine; by PHK and PKC modification. Basic and acidic residues predominate over residues 54 to 83 (EKKDDAQAAEAEANKKDEAPVADGVEKKGE). Low complexity predominate over residues 84–95 (GTTATEAAPATG). Basic and acidic residues predominate over residues 97–116 (KPDEPGKAGETPSEEKKGEG). Residues 119–130 (ATEQAAPQAPAS) show a composition bias toward low complexity. Over residues 139-154 (ETESATKASTDNSPSS) the composition is skewed to polar residues. Phosphoserine occurs at positions 151, 153, and 154. Positions 155-167 (KAEDAPAKEEPKQ) are enriched in basic and acidic residues. Residues 168–199 (ADVPAAVTAAAATTPAAEDAAAKATAQPPTET) show a composition bias toward low complexity. T181 carries the phosphothreonine modification. Phosphoserine; by CK2 occurs at positions 202 and 203. The span at 213–225 (DETKPKESARQDE) shows a compositional bias: basic and acidic residues. Residues 226–238 (GKEEEPEADQEHA) show a composition bias toward acidic residues.

The protein belongs to the neuromodulin family. As to quaternary structure, identified in a complex containing FGFR4, NCAM1, CDH2, PLCG1, FRS2, SRC, SHC1, GAP43 and CTTN. Interacts (via IQ domain) with calmodulin. Binds calmodulin with a greater affinity in the absence of Ca(2+) than in its presence. Phosphorylated. Phosphorylation of this protein by a protein kinase C is specifically correlated with certain forms of synaptic plasticity. Post-translationally, palmitoylated by ZDHHC3. Palmitoylation is regulated by ARF6 and is essential for plasma membrane association and axonal and dendritic filopodia induction. Deacylated by LYPLA2.

It localises to the cell membrane. It is found in the cell projection. Its subcellular location is the growth cone membrane. The protein resides in the synapse. The protein localises to the filopodium membrane. It localises to the perikaryon. It is found in the dendrite. Its subcellular location is the axon. The protein resides in the cytoplasm. Its function is as follows. This protein is associated with nerve growth. It is a major component of the motile 'growth cones' that form the tips of elongating axons. Plays a role in axonal and dendritic filopodia induction. The protein is Neuromodulin (GAP43) of Macaca fascicularis (Crab-eating macaque).